Here is a 260-residue protein sequence, read N- to C-terminus: Scytalidopepsin B (260 aa).

The N-terminal stretch at 1–20 is a signal peptide; that stretch reads MKFTTAAVLSALVSAEIAFA. The propeptide occupies 21 to 54; it reads APGGNGFARRQARRQARAAGLKASPFRQVNAKEA. C101 and C181 are oxidised to a cystine. E190 functions as the Proton acceptor in the catalytic mechanism. Cystine bridges form between C195–C219 and C248–C257.

Belongs to the peptidase G1 family. As to quaternary structure, monomer.

It catalyses the reaction Hydrolysis of proteins with broad specificity, cleaving 24-Phe-|-Phe-25, but not 15-Leu-|-Tyr-16 and 25-Phe-|-Tyr-26 in the B chain of insulin.. The protein is Scytalidopepsin B of Scytalidium lignicola (Hyphomycete).